A 524-amino-acid chain; its full sequence is MANINMADTAPSCDTYLLFNGETLLPNGVRAFIYTVVLAYCFIGLSAISGRFFKSMESIMRHSREVVTIDPHTNATIVKHEKVWNYTIADVALLAFGTSFPQISLATIDAIRNLGQLTAGGLGPGTLVGSAAFDLFPIHAVCVVMPRAGSKKKISDLGVWLVELFWSFWAYIWLYIILEVWTPRVITLWEALLTVLQYGLLLLHAYAQDKRWPYVSIPLARGDRPEDWVPTEDASVDYDDNYDGIGDILPGQNEDIVDIFSARSYSNEGYHHVSEKDVEESPTGLTLKNKWEDTHWFSIWWQQFVDAATLESSVSRKMDSTCLSVIGISWNLIIAPWKMLFAFIPPYEIAHGWIAFICSLIFISGIAYGVTKITDQISCVTGVSPYVIAFTALAAGTSWPDLVASKIAAERQITADSAIANITCSNSVNIYVGIGVPWLVDTMYNYLFVYKKPLYIDNAAGLSFSLLVFFATSFGCITVLVLRRVILGAELGGPRMWAWATSVYFMILWVVFVVLSSLRISGVI.

The next 11 membrane-spanning stretches (helical) occupy residues 28–48, 88–108, 125–145, 157–177, 185–205, 325–345, 349–369, 377–397, 430–450, 462–482, and 496–516; these read GVRA…LSAI, IADV…LATI, GTLV…CVVM, LGVW…LYII, VITL…LLHA, VIGI…AFIP, IAHG…IAYG, ISCV…AAGT, IYVG…LFVY, LSFS…VLVL, and MWAW…VVLS.

Belongs to the Ca(2+):cation antiporter (CaCA) (TC 2.A.19) family. MHX subfamily.

The protein resides in the vacuole membrane. Its function is as follows. Vacuolar transporter that exchanges protons with Mg(2+), Zn(2+) and Fe(2+) ions. May control the partitioning of Mg(2+) and Zn(2+) between plant organs. The chain is Magnesium/proton exchanger 2 (MHX2) from Oryza sativa subsp. japonica (Rice).